Here is a 218-residue protein sequence, read N- to C-terminus: Protein-methionine-sulfoxide reductase heme-binding subunit MsrQ (218 aa).

A run of 5 helical transmembrane segments spans residues 8 to 28 (VIVA…LLGW), 60 to 80 (FLLI…AVLI), 86 to 106 (LGLY…TLDL), 121 to 141 (PYIT…ITST), and 155 to 175 (VHML…WLVK).

It belongs to the MsrQ family. As to quaternary structure, heterodimer of a catalytic subunit (MsrP) and a heme-binding subunit (MsrQ). FMN serves as cofactor. It depends on heme b as a cofactor.

It is found in the cell inner membrane. Part of the MsrPQ system that repairs oxidized periplasmic proteins containing methionine sulfoxide residues (Met-O), using respiratory chain electrons. Thus protects these proteins from oxidative-stress damage caused by reactive species of oxygen and chlorine generated by the host defense mechanisms. MsrPQ is essential for the maintenance of envelope integrity under bleach stress, rescuing a wide series of structurally unrelated periplasmic proteins from methionine oxidation. MsrQ provides electrons for reduction to the reductase catalytic subunit MsrP, using the quinone pool of the respiratory chain. The protein is Protein-methionine-sulfoxide reductase heme-binding subunit MsrQ of Xanthomonas oryzae pv. oryzae (strain MAFF 311018).